The sequence spans 1052 residues: RIMS-binding protein 2 (1052 aa).

Positions 115–164 (GEYIRPLPQPGDRPEPLSAKPTFLSRSGSARCRSESDMENERNSNTSKQR) are disordered. Basic and acidic residues predominate over residues 146–156 (CRSESDMENER). The SH3 1 domain maps to 167–234 (GKVHLCVARY…PSNFVDFVQD (68 aa)). 3 consecutive Fibronectin type-III domains span residues 297–390 (VPYP…GKDV), 393–475 (APSH…KKEA), and 489–590 (PPQD…VPPT). Disordered regions lie at residues 584–615 (ELLV…DEHL), 629–666 (RAPG…PVST), 697–716 (SAGQ…PDFK), 767–787 (EMQL…NALK), and 805–829 (FPRG…YGRD). Residues 585–598 (LLVPPTPHPRPAPQ) are compositionally biased toward pro residues. The span at 645–654 (PGRRSPSPSR) shows a compositional bias: low complexity. Serine 704 and serine 712 each carry phosphoserine. Residues serine 832 and serine 839 each carry the phosphoserine modification. Threonine 841 is modified (phosphothreonine). SH3 domains are found at residues 848-916 (LPAR…EIQA) and 952-1019 (VSTR…EVPD). A disordered region spans residues 1029 to 1052 (PSHYSQDTPMRSKAKRKKSVHFTP). A compositionally biased stretch (basic residues) spans 1040 to 1052 (SKAKRKKSVHFTP).

Belongs to the RIMBP family. Interacts with RIMS1, RIMS2, CACNA1D and CACNA1B, and potentially with other Ca(2+) channel alpha-1 isoforms.

It is found in the cell membrane. The protein resides in the synapse. Plays a role in the synaptic transmission as bifunctional linker that interacts simultaneously with RIMS1, RIMS2, CACNA1D and CACNA1B. The polypeptide is RIMS-binding protein 2 (RIMBP2) (Homo sapiens (Human)).